The following is a 147-amino-acid chain: Male-specific protein scotti (147 aa).

The interval 57 to 76 is disordered; the sequence is EPPLGVFPAQGGPNGPPRLR. A glycan (N-linked (GlcNAc...) asparagine) is linked at asparagine 128.

Belongs to the male-specific scotti family.

In terms of biological role, post-meiotically transcribed gene that has a role in late spermiogenesis; required for actin cone progression during spermatid individualization. This is Male-specific protein scotti from Drosophila simulans (Fruit fly).